The chain runs to 253 residues: 5-oxoprolinase subunit A (253 aa).

Belongs to the LamB/PxpA family. As to quaternary structure, forms a complex composed of PxpA, PxpB and PxpC.

The catalysed reaction is 5-oxo-L-proline + ATP + 2 H2O = L-glutamate + ADP + phosphate + H(+). Functionally, catalyzes the cleavage of 5-oxoproline to form L-glutamate coupled to the hydrolysis of ATP to ADP and inorganic phosphate. This is 5-oxoprolinase subunit A from Bacillus cereus (strain ATCC 14579 / DSM 31 / CCUG 7414 / JCM 2152 / NBRC 15305 / NCIMB 9373 / NCTC 2599 / NRRL B-3711).